Here is a 206-residue protein sequence, read N- to C-terminus: GTP cyclohydrolase 1 (206 aa).

Cysteine 95, histidine 98, and cysteine 166 together coordinate Zn(2+).

This sequence belongs to the GTP cyclohydrolase I family. As to quaternary structure, toroid-shaped homodecamer, composed of two pentamers of five dimers.

It catalyses the reaction GTP + H2O = 7,8-dihydroneopterin 3'-triphosphate + formate + H(+). It participates in cofactor biosynthesis; 7,8-dihydroneopterin triphosphate biosynthesis; 7,8-dihydroneopterin triphosphate from GTP: step 1/1. This chain is GTP cyclohydrolase 1, found in Bartonella bacilliformis (strain ATCC 35685 / KC583 / Herrer 020/F12,63).